The following is a 204-amino-acid chain: Urease accessory protein UreG (204 aa).

12–19 (GPVGSGKT) serves as a coordination point for GTP.

It belongs to the SIMIBI class G3E GTPase family. UreG subfamily. As to quaternary structure, homodimer. UreD, UreF and UreG form a complex that acts as a GTP-hydrolysis-dependent molecular chaperone, activating the urease apoprotein by helping to assemble the nickel containing metallocenter of UreC. The UreE protein probably delivers the nickel.

The protein resides in the cytoplasm. Functionally, facilitates the functional incorporation of the urease nickel metallocenter. This process requires GTP hydrolysis, probably effectuated by UreG. The polypeptide is Urease accessory protein UreG (Hahella chejuensis (strain KCTC 2396)).